Reading from the N-terminus, the 744-residue chain is Cell surface receptor daf-4 (744 aa).

The signal sequence occupies residues 1–31 (MNQKGTVRLKALVLICLPLFLIATPVPVAVT). The Extracellular segment spans residues 48–253 (WANTLVSKVA…IALLILAYVG (206 aa)). 3 N-linked (GlcNAc...) asparagine glycosylation sites follow: Asn-60, Asn-134, and Asn-165. A helical membrane pass occupies residues 254–274 (WKFQQNKKEEIKKQQKIKFDM). At 275 to 744 (EKTDALEAGN…PSGTFGTFTT (470 aa)) the chain is on the cytoplasmic side. One can recognise a Protein kinase domain in the interval 306–603 (ITDFQLISKG…FARVWNHIMS (298 aa)). Residues 312 to 320 (ISKGRFGKV) and Lys-338 contribute to the ATP site. The active-site Proton acceptor is the Asp-440. Disordered regions lie at residues 605 to 686 (PDSS…PEPE) and 724 to 744 (AGADTRASTPTPSGTFGTFTT). Residues 620-639 (RGVDDVEQSEKPEGIEEMQH) show a composition bias toward basic and acidic residues. Over residues 731 to 744 (STPTPSGTFGTFTT) the composition is skewed to low complexity.

This sequence belongs to the protein kinase superfamily. TKL Ser/Thr protein kinase family. TGFB receptor subfamily. In terms of assembly, may interact with daf-1 to regulate dauer larva development. Interacts with sma-10. As to expression, pharynx, intestine, hypodermis and body wall muscles in L1 through to adult stages. Also expressed in head neurons, ventral cord and tail neurons. Subset of head neurons show coexpression with daf-1 when dauer/nondauer decision is made.

The protein localises to the cell membrane. It carries out the reaction L-threonyl-[receptor-protein] + ATP = O-phospho-L-threonyl-[receptor-protein] + ADP + H(+). The enzyme catalyses L-seryl-[receptor-protein] + ATP = O-phospho-L-seryl-[receptor-protein] + ADP + H(+). In terms of biological role, involved in a TGF-beta pathway. May be a receptor for TGF-beta-like ligand daf-7. Controls the decision of whether or not larvae enter a developmentally arrested state, known as dauer, in response to environmental conditions. Regulates body size and male tail patterning. Involved in regulating entry into quiescence triggered by satiety. Involved in sensitivity to CO2 levels. The protein is Cell surface receptor daf-4 of Caenorhabditis elegans.